Here is a 1052-residue protein sequence, read N- to C-terminus: Focal adhesion kinase 1 (1052 aa).

The segment at 1-27 (MAAAYLDPNLNHTPSSSTKTHLGTGME) is disordered. At alanine 2 the chain carries N-acetylalanine. Tyrosine 5 is subject to Phosphotyrosine. The span at 10–21 (LNHTPSSSTKTH) shows a compositional bias: polar residues. Position 13 is a phosphothreonine (threonine 13). Residues serine 29 and serine 54 each carry the phosphoserine modification. The FERM domain occupies 35–355 (RVLKVFHYFE…GYCRLVNGAT (321 aa)). Lysine 152 is covalently cross-linked (Glycyl lysine isopeptide (Lys-Gly) (interchain with G-Cter in SUMO)). Phosphotyrosine is present on residues tyrosine 397 and tyrosine 407. Tyrosine 397 carries the phosphotyrosine; by autocatalysis modification. ATP contacts are provided by residues 428–434 (IGEGQFG), lysine 454, and 500–502 (ELC). One can recognise a Protein kinase domain in the interval 431 to 680 (GQFGDVHQGV…ELKAQLSTIL (250 aa)). Catalysis depends on aspartate 546, which acts as the Proton acceptor. Tyrosine 570 bears the Phosphotyrosine mark. A phosphotyrosine; by RET and SRC mark is found at tyrosine 576 and tyrosine 577. Serine 580 is modified (phosphoserine). A compositionally biased stretch (basic and acidic residues) spans 685 to 697 (VQQEERMRMESRR). 2 disordered regions span residues 685–734 (VQQE…PSPQ) and 837–921 (VRLS…DRSN). The interaction with TGFB1I1 stretch occupies residues 707-1052 (GSDEAPPKPS…LKMLGQTRPH (346 aa)). Phosphoserine is present on serine 722. Serine 732 bears the Phosphoserine; by CDK5 mark. The segment covering 837-849 (VRLSRGSIDREDG) has biased composition (basic and acidic residues). Position 843 is a phosphoserine (serine 843). Position 861 is a phosphotyrosine (tyrosine 861). The span at 869–880 (PAAPPKKPPRPG) shows a compositional bias: pro residues. A compositionally biased stretch (polar residues) spans 886–896 (SNLSSISSPAD). Serine 910 carries the post-translational modification Phosphoserine. Residues 912–1052 (PPTANLDRSN…LKMLGQTRPH (141 aa)) are interaction with ARHGEF28. Threonine 914 carries the post-translational modification Phosphothreonine. At tyrosine 925 the chain carries Phosphotyrosine; by SRC.

This sequence belongs to the protein kinase superfamily. Tyr protein kinase family. FAK subfamily. Interacts with GIT1. Component of a complex that contains at least FER, CTTN and PTK2/FAK1. Interacts with BMX. Interacts with STEAP4. Interacts with ZFYVE21. Interacts with ESR1. Interacts with FGR, FLT4 and RET. Interacts with EPHA2 in resting cells; activation of EPHA2 recruits PTPN11, leading to dephosphorylation of PTK2/FAK1 and dissociation of the complex. Interacts with EPHA1 (kinase activity-dependent). Interacts with MISP. Interacts with PIAS1. Interacts with ARHGAP26 and SHC1. Interacts with RB1CC1; this inhibits PTK2/FAK1 activity and activation of downstream signaling pathways. Interacts with P53/TP53. Interacts with STAT1. Interacts with WASL. Interacts with ARHGEF7. Interacts with DCC. Interacts (via first Pro-rich region) with CAS family members (via SH3 domain), including BCAR1, BCAR3 and CASS4. Interacts with NEDD9 (via C-terminus). Interacts with SORBS1. Interacts with ARHGEF28. Interacts with SHB. Part of a complex composed of THSD1, PTK2/FAK1, TLN1 and VCL. Interacts with PXN and TLN1. Interacts with TGFB1I1. Interacts with PIK3R1 or PIK3R2. Interacts with SRC, GRB2 and GRB7. Interacts with LPXN (via LD motif 3). Interacts with CD36. Interacts with EMP2; regulates PTK2 activation and localization. Interacts with DSCAM. Interacts with AMBRA1. Interacts (when tyrosine-phosphorylated) with tensin TNS1; the interaction is increased by phosphorylation of TNS1. Post-translationally, phosphorylated on tyrosine residues upon activation, e.g. upon integrin signaling. Tyr-397 is the major autophosphorylation site, but other kinases can also phosphorylate this residue. Phosphorylation at Tyr-397 promotes interaction with SRC and SRC family members, leading to phosphorylation at Tyr-576, Tyr-577 and at additional tyrosine residues. FGR promotes phosphorylation at Tyr-397 and Tyr-576. FER promotes phosphorylation at Tyr-577, Tyr-861 and Tyr-925, even when cells are not adherent. Tyr-397, Tyr-576 and Ser-722 are phosphorylated only when cells are adherent. Phosphorylation at Tyr-397 is important for interaction with BMX, PIK3R1 and SHC1. Phosphorylation at Tyr-925 is important for interaction with GRB2. Dephosphorylated by PTPN11; PTPN11 is recruited to PTK2 via EPHA2 (tyrosine phosphorylated). Microtubule-induced dephosphorylation at Tyr-397 is crucial for the induction of focal adhesion disassembly; this dephosphorylation could be catalyzed by PTPN11 and regulated by ZFYVE21. Phosphorylation on tyrosine residues is enhanced by NTN1. In terms of processing, sumoylated; this enhances autophosphorylation.

It localises to the cell junction. The protein resides in the focal adhesion. It is found in the cell membrane. The protein localises to the cytoplasm. Its subcellular location is the perinuclear region. It localises to the cell cortex. The protein resides in the cytoskeleton. It is found in the microtubule organizing center. The protein localises to the centrosome. Its subcellular location is the nucleus. It localises to the cilium basal body. The catalysed reaction is L-tyrosyl-[protein] + ATP = O-phospho-L-tyrosyl-[protein] + ADP + H(+). Its activity is regulated as follows. Subject to autoinhibition, mediated by interactions between the FERM domain and the kinase domain. Activated by autophosphorylation at Tyr-397. This promotes interaction with SRC and phosphorylation at Tyr-576 and Tyr-577 in the kinase activation loop by SRC. Phosphorylation at Tyr-397, Tyr-576 and Tyr-577 is required for maximal kinase activity. Non-receptor protein-tyrosine kinase that plays an essential role in regulating cell migration, adhesion, spreading, reorganization of the actin cytoskeleton, formation and disassembly of focal adhesions and cell protrusions, cell cycle progression, cell proliferation and apoptosis. Required for early embryonic development and placenta development. Required for embryonic angiogenesis, normal cardiomyocyte migration and proliferation, and normal heart development. Regulates axon growth and neuronal cell migration, axon branching and synapse formation; required for normal development of the nervous system. Plays a role in osteogenesis and differentiation of osteoblasts. Functions in integrin signal transduction, but also in signaling downstream of numerous growth factor receptors, G-protein coupled receptors (GPCR), EPHA2, netrin receptors and LDL receptors. Forms multisubunit signaling complexes with SRC and SRC family members upon activation; this leads to the phosphorylation of additional tyrosine residues, creating binding sites for scaffold proteins, effectors and substrates. Regulates numerous signaling pathways. Promotes activation of phosphatidylinositol 3-kinase and the AKT1 signaling cascade. Promotes activation of MAPK1/ERK2, MAPK3/ERK1 and the MAP kinase signaling cascade. Promotes localized and transient activation of guanine nucleotide exchange factors (GEFs) and GTPase-activating proteins (GAPs), and thereby modulates the activity of Rho family GTPases. Signaling via CAS family members mediates activation of RAC1. Phosphorylates NEDD9 following integrin stimulation. Recruits the ubiquitin ligase MDM2 to P53/TP53 in the nucleus, and thereby regulates P53/TP53 activity, P53/TP53 ubiquitination and proteasomal degradation. Phosphorylates SRC; this increases SRC kinase activity. Phosphorylates ACTN1, ARHGEF7, GRB7, RET and WASL. Promotes phosphorylation of PXN and STAT1; most likely PXN and STAT1 are phosphorylated by a SRC family kinase that is recruited to autophosphorylated PTK2/FAK1, rather than by PTK2/FAK1 itself. Promotes phosphorylation of BCAR1; GIT2 and SHC1; this requires both SRC and PTK2/FAK1. Promotes phosphorylation of BMX and PIK3R1. In terms of biological role, does not contain a kinase domain and inhibits PTK2/FAK1 phosphorylation and signaling. Its enhanced expression can attenuate the nuclear accumulation of LPXN and limit its ability to enhance serum response factor (SRF)-dependent gene transcription. The sequence is that of Focal adhesion kinase 1 from Mus musculus (Mouse).